Reading from the N-terminus, the 3118-residue chain is Laminin subunit alpha-2 (3118 aa).

The signal sequence occupies residues 1 to 19 (MPAATAGILLLLLLGTLEG). Positions 31 to 282 (QQRGLFPAVL…SVKDISVGGM (252 aa)) constitute a Laminin N-terminal domain. N51 and N85 each carry an N-linked (GlcNAc...) asparagine glycan. Disulfide bonds link C283-C292, C285-C303, C305-C314, C317-C337, C340-C349, and C342-C374. Laminin EGF-like domains are found at residues 283-339 (CICY…ECEA), 340-409 (CNCH…PCQP), 410-464 (CHCD…DCQP), and 465-513 (CNCS…GCEE). N-linked (GlcNAc...) asparagine glycosylation is present at N299. N359 and N376 each carry an N-linked (GlcNAc...) asparagine glycan. 10 cysteine pairs are disulfide-bonded: C377-C386, C389-C407, C410-C422, C412-C438, C440-C449, C452-C462, C465-C478, C467-C482, C484-C493, and C496-C511. The N-linked (GlcNAc...) asparagine glycan is linked to N466. Positions 514–523 (CFCSGVSNRC) constitute a Laminin EGF-like 5; first part domain. Residues 527–719 (YWTYGNIQDM…DRRIATDVEV (193 aa)) enclose the Laminin IV type A 1 domain. Residues 720 to 752 (CQCPPGYSGSSCETCWPRHRRVNGTIFGGICEP) form the Laminin EGF-like 5; second part domain. A glycan (N-linked (GlcNAc...) asparagine) is linked at N742. Intrachain disulfides connect C753–C762, C755–C769, C772–C781, C784–C800, C803–C818, C805–C828, C831–C840, C843–C858, C861–C875, C863–C882, C885–C894, C897–C911, C914–C926, C916–C933, C935–C944, C947–C960, C963–C975, C965–C981, C983–C992, C995–C1007, C1010–C1019, C1012–C1026, C1028–C1037, C1040–C1053, C1056–C1068, C1058–C1075, C1077–C1086, C1089–C1099, C1102–C1114, C1104–C1130, C1132–C1141, and C1144–C1159. Laminin EGF-like domains lie at 753 to 802 (CQCF…DCQP), 803 to 860 (CACP…SCQP), 861 to 913 (CQCN…NCQP), 914 to 962 (CRCN…GCLP), 963 to 1009 (CNCN…GCIA), 1010 to 1055 (CDCS…GCKV), 1056 to 1101 (CNCS…LCTL), and 1102 to 1161 (CDCF…GCSS). N-linked (GlcNAc...) asparagine glycosylation occurs at N919. An N-linked (GlcNAc...) asparagine glycan is attached at N1031. N1057 carries N-linked (GlcNAc...) asparagine glycosylation. The Laminin EGF-like 14; first part domain maps to 1162 to 1171 (CYCFGVTSQC). The 204-residue stretch at 1172–1375 (SEAKGLIRTW…GSPPAHLIER (204 aa)) folds into the Laminin IV type A 2 domain. One can recognise a Laminin EGF-like 14; second part domain in the interval 1376–1415 (CDCPPGYSGLSCETCAPGFYRLRSEPGGRTPGPTLGTCVP). Disulfide bonds link C1378-C1387, C1416-C1425, C1418-C1432, C1435-C1444, C1447-C1462, C1465-C1480, C1467-C1490, C1493-C1502, C1505-C1520, C1523-C1535, C1525-C1542, C1544-C1553, and C1556-C1567. 3 consecutive Laminin EGF-like domains span residues 1416–1464 (CQCN…DCQP), 1465–1522 (CACP…SCQE), and 1523–1569 (CECD…ECVF). The segment at 1570 to 2140 (CGDECTGLLL…NQARKQANSI (571 aa)) is domain II and I. N-linked (GlcNAc...) asparagine glycosylation is found at N1593, N1610, N1696, N1806, N1897, N1912, N1916, N2013, N2024, N2041, N2122, and N2236. The stretch at 1662–1863 (QDAERTNSRA…DIKTKLPPMS (202 aa)) forms a coiled coil. A coiled-coil region spans residues 1923–2146 (AYSNIKDYID…ANSIKVSVSS (224 aa)). Laminin G-like domains lie at 2141–2324 (KVSV…CKGC), 2336–2517 (TIQF…TKGC), 2522–2706 (VYTV…IGRC), 2759–2930 (SKQF…VGTC), and 2929–3115 (TCFA…PVSC). Residues C2298 and C2324 are joined by a disulfide bond. N-linked (GlcNAc...) asparagine glycosylation is found at N2356, N2431, and N2474. Cysteines 2491 and 2517 form a disulfide. N-linked (GlcNAc...) asparagine glycans are attached at residues N2547, N2554, and N2644. A disulfide bridge connects residues C2679 and C2706. N2889 is a glycosylation site (N-linked (GlcNAc...) asparagine). Cystine bridges form between C2905-C2930 and C3083-C3115.

Laminin is a complex glycoprotein, consisting of three different polypeptide chains (alpha, beta, gamma), which are bound to each other by disulfide bonds into a cross-shaped molecule comprising one long and three short arms with globules at each end. Alpha-2 is a subunit of laminin-2 (laminin-211 or merosin), laminin-4 (laminin-221 or S-merosin) and laminin-12 (laminin-213). Interacts with FBLN1, FBLN2 and NID2.

The protein localises to the secreted. It localises to the extracellular space. It is found in the extracellular matrix. The protein resides in the basement membrane. In terms of biological role, binding to cells via a high affinity receptor, laminin is thought to mediate the attachment, migration and organization of cells into tissues during embryonic development by interacting with other extracellular matrix components. This Mus musculus (Mouse) protein is Laminin subunit alpha-2 (Lama2).